A 173-amino-acid chain; its full sequence is Large ribosomal subunit protein uL10 (173 aa).

Belongs to the universal ribosomal protein uL10 family. In terms of assembly, part of the ribosomal stalk of the 50S ribosomal subunit. The N-terminus interacts with L11 and the large rRNA to form the base of the stalk. The C-terminus forms an elongated spine to which L12 dimers bind in a sequential fashion forming a multimeric L10(L12)X complex.

Functionally, forms part of the ribosomal stalk, playing a central role in the interaction of the ribosome with GTP-bound translation factors. In Thermus thermophilus (strain ATCC BAA-163 / DSM 7039 / HB27), this protein is Large ribosomal subunit protein uL10.